We begin with the raw amino-acid sequence, 509 residues long: H/ACA ribonucleoprotein complex subunit DKC1 (509 aa).

A disordered region spans residues 1–24; the sequence is MADAEVITFPKKHKKKKDRKPLQE. Position 2 is an N-acetylalanine (Ala2). The tract at residues 2–21 is nucleolar localization; it reads ADAEVITFPKKHKKKKDRKP. The segment covering 10-19 has biased composition (basic residues); sequence PKKHKKKKDR. Glycyl lysine isopeptide (Lys-Gly) (interchain with G-Cter in SUMO2) cross-links involve residues Lys20, Lys39, and Lys43. The Nucleophile role is filled by Asp125. Lys191 participates in a covalent cross-link: Glycyl lysine isopeptide (Lys-Gly) (interchain with G-Cter in SUMO2). Positions 297–372 constitute a PUA domain; sequence KRLVMKDSAV…VAKIKRVIME (76 aa). A Phosphoserine modification is found at Ser387. Lys394 participates in a covalent cross-link: Glycyl lysine isopeptide (Lys-Gly) (interchain with G-Cter in SUMO2). Lys413 is covalently cross-linked (Glycyl lysine isopeptide (Lys-Gly) (interchain with G-Cter in SUMO1); alternate). Lys413 is covalently cross-linked (Glycyl lysine isopeptide (Lys-Gly) (interchain with G-Cter in SUMO2); alternate). Lys424 is covalently cross-linked (Glycyl lysine isopeptide (Lys-Gly) (interchain with G-Cter in SUMO2)). The interval 446–509 is nuclear and nucleolar localization; it reads KRKRDSESES…KVKVVEEMSE (64 aa). Positions 447-509 are disordered; that stretch reads RKRDSESESD…KVKVVEEMSE (63 aa). Ser451, Ser453, and Ser455 each carry phosphoserine. Thr458 carries the post-translational modification Phosphothreonine. The span at 466-476 shows a compositional bias: basic residues; that stretch reads EKKKKKDKKPK. Ser481 carries the post-translational modification Phosphoserine. The residue at position 485 (Thr485) is a Phosphothreonine. Ser508 carries the post-translational modification Phosphoserine.

The protein belongs to the pseudouridine synthase TruB family. Part of the H/ACA small nucleolar ribonucleoprotein (H/ACA snoRNP) complex, which contains NHP2/NOLA2, GAR1/NOLA1, NOP10/NOLA3, and DKC1/NOLA4, which is presumed to be the catalytic subunit. The complex contains a stable core formed by binding of one or two NOP10-DKC1 heterodimers to NHP2; GAR1 subsequently binds to this core via DKC1. The complex binds a box H/ACA small nucleolar RNA (snoRNA), which may target the specific site of modification within the RNA substrate. During assembly, the complex contains NAF1 instead of GAR1/NOLA1. The complex also interacts with TERC, which contains a 3'-terminal domain related to the box H/ACA snoRNAs. Specific interactions with snoRNAs or TERC are mediated by GAR1 and NHP2. Associates with NOLC1/NOPP140. H/ACA snoRNPs interact with the SMN complex, consisting of SMN1 or SMN2, GEMIN2/SIP1, DDX20/GEMIN3, and GEMIN4. This is mediated by interaction between GAR1 and SMN1 or SMN2. The SMN complex may be required for correct assembly of the H/ACA snoRNP complex. Component of the telomerase holoenzyme complex composed of one molecule of TERT, one molecule of WRAP53/TCAB1, two molecules of H/ACA ribonucleoprotein complex subunits DKC1, NOP10, NHP2 and GAR1, and a telomerase RNA template component (TERC). The telomerase holoenzyme complex is associated with TEP1, SMG6/EST1A and POT1. Interacts with SHQ1; this interaction may lead to the stabilization of DKC1, from the time of its synthesis until its association with NOP10, NHP2, and NAF1 at the nascent H/ACA RNA. Interacts with HMBOX1. Interacts with DHX36. As to expression, ubiquitously expressed, with elevated levels in Purkinje cells, the olfactory bulb, and Leydig cells of the testis.

The protein localises to the nucleus. Its subcellular location is the nucleolus. It is found in the cajal body. The catalysed reaction is uridine in 5S rRNA = pseudouridine in 5S rRNA. In terms of biological role, catalytic subunit of H/ACA small nucleolar ribonucleoprotein (H/ACA snoRNP) complex, which catalyzes pseudouridylation of rRNA. This involves the isomerization of uridine such that the ribose is subsequently attached to C5, instead of the normal N1. Each rRNA can contain up to 100 pseudouridine ('psi') residues, which may serve to stabilize the conformation of rRNAs. Required for ribosome biogenesis and telomere maintenance. Also required for correct processing or intranuclear trafficking of TERC, the RNA component of the telomerase reverse transcriptase (TERT) holoenzyme. In Mus musculus (Mouse), this protein is H/ACA ribonucleoprotein complex subunit DKC1 (Dkc1).